Consider the following 192-residue polypeptide: Erythropoietin (192 aa).

An N-terminal signal peptide occupies residues 1–27 (MGVHECPAWLWLLLSLVSLPLGLPVPG). 2 disulfides stabilise this stretch: Cys-34-Cys-187 and Cys-56-Cys-60. Asn-51 carries an N-linked (GlcNAc...) asparagine glycan. Asn-65 and Asn-110 each carry an N-linked (GlcNAc...) asparagine glycan. An O-linked (GalNAc...) serine glycan is attached at Ser-152.

This sequence belongs to the EPO/TPO family. In terms of tissue distribution, produced by kidney or liver of adult mammals and by liver of fetal or neonatal mammals.

It localises to the secreted. Functionally, hormone involved in the regulation of erythrocyte proliferation and differentiation and the maintenance of a physiological level of circulating erythrocyte mass. Binds to EPOR leading to EPOR dimerization and JAK2 activation thereby activating specific downstream effectors, including STAT1 and STAT3. The sequence is that of Erythropoietin (EPO) from Macaca fascicularis (Crab-eating macaque).